Consider the following 85-residue polypeptide: Beta-defensin 18 (85 aa).

The signal sequence occupies residues 1–23 (MQSTMKMFGIILMVIFSVSCGPS). Disulfide bonds link cysteine 39/cysteine 65, cysteine 46/cysteine 60, and cysteine 50/cysteine 66.

This sequence belongs to the beta-defensin family.

It is found in the secreted. Functionally, has antibacterial activity. The protein is Beta-defensin 18 (Defb18) of Mus musculus (Mouse).